A 236-amino-acid chain; its full sequence is Terpene cyclase andB (236 aa).

7 consecutive transmembrane segments (helical) span residues 13 to 33, 45 to 65, 70 to 90, 106 to 126, 135 to 155, 166 to 186, and 200 to 220; these read TVVN…YILM, MSML…ILCP, VVRP…YAAI, HLPL…IALI, FLWS…FQLL, VLWL…TLMW, and LTAY…VVFY.

This sequence belongs to the paxB family.

The protein resides in the membrane. It functions in the pathway secondary metabolite biosynthesis; terpenoid biosynthesis. Its function is as follows. Terpene cyclase; part of the gene cluster that mediates the biosynthesis of anditomin, a fungal meroterpenoid. The first step of the pathway is the synthesis of 3,5-dimethylorsellinic acid (DMOA) by the polyketide synthase andM. DMOA is then converted to the phthalide compound 5,7-dihydroxy-4,6-dimethylphthalide (DHDMP) by the cytochrome P450 monooxygenase andK, which is further prenylated by the prenyltransferase andD to yield farnesyl-DHDMP. Further epoxidation by the FAD-dependent monooxygenase andE leads to epoxyfarnesyl-DHDMP. The next step involves the terpene cyclase andB that converts epoxyfarnesyl-DHDMP into preandiloid A through opening of the epoxide ring followed by the cyclization of the farnesyl moiety. Preandiloid A is in turn oxidized at the C-3 hydroxyl group to yield preandiloid B by the dehydrogenase andC. The dioxygenase andA is solely responsible for the dehydrogenation of preandiloid B leading to the enone preandiloid C, as well as for the intriguing structural rearrangement to generate the bicyclo[2.2.2]octane core, transforming preandiloid C into andiconin. FAD-binding monooxygenase andJ then produces andilesin D which is reduced by dehydrogenase andI to yield andilesin A. Action of acetyltransferase andG followed by a spontaneous acetate elimination leads then to andilesin B, which is in turn substrate of the short chain dehydrogenase andH to yield andilesin C. Finally, the dioxygenase andF catalyzes the transformation of andilesin C to anditomin. In Emericella variicolor (Aspergillus stellatus), this protein is Terpene cyclase andB.